A 685-amino-acid polypeptide reads, in one-letter code: Frizzled-8 (685 aa).

The first 27 residues, 1–27 (MEWGYLLEVTSLLAALAVLQRSSGAAA), serve as a signal peptide directing secretion. The Extracellular portion of the chain corresponds to 28 to 272 (ASAKELACQE…NPFFSQDERA (245 aa)). Residues 30-151 (AKELACQEIT…GNPDTLCMDY (122 aa)) enclose the FZ domain. 5 disulfides stabilise this stretch: C35–C96, C43–C89, C80–C118, C107–C148, and C111–C135. Residue N49 is glycosylated (N-linked (GlcNAc...) asparagine). Residue 71-78 (QFWPLVEI) coordinates hexadecanoate. The tract at residues 95 to 100 (ICLEDY) is wnt-binding. A wnt-binding region spans residues 147–152 (LCMDYN). N152 carries an N-linked (GlcNAc...) asparagine glycan. A disordered region spans residues 155–223 (DLTTAAPSPP…KARPPGGGAA (69 aa)). Residues 161-176 (PSPPRRLPPPPPPGEQ) show a composition bias toward pro residues. Low complexity-rich tracts occupy residues 177–187 (PPSGSGHSRPP) and 200–223 (GSGD…GGAA). A helical transmembrane segment spans residues 273–293 (FTVFWIGLWSVLCFVSTFATV). Over 294–309 (STFLIDMERFKYPERP) the chain is Cytoplasmic. The chain crosses the membrane as a helical span at residues 310 to 330 (IIFLSACYLFVSVGYLVRLVA). At 331–394 (GHEKVACSGG…RYETTGPALC (64 aa)) the chain is on the extracellular side. The helical transmembrane segment at 395 to 415 (TVVFLLVYFFGMASSIWWVIL) threads the bilayer. The Cytoplasmic segment spans residues 416–437 (SLTWFLAAGMKWGNEAIAGYSQ). Residues 438-458 (YFHLAAWLVPSVKSIAVLALS) traverse the membrane as a helical segment. Residues 459–481 (SVDGDPVAGICYVGNQSLDNLRG) lie on the Extracellular side of the membrane. N473 is a glycosylation site (N-linked (GlcNAc...) asparagine). Residues 482 to 502 (FVLAPLVIYLFIGTMFLLAGF) form a helical membrane-spanning segment. The Cytoplasmic segment spans residues 503–530 (VSLFRIRSVIKQQGGPTKTHKLEKLMIR). A helical membrane pass occupies residues 531-551 (LGLFTVLYTVPAAVVVACLFY). Residues 552–582 (EQHNRPRWEATHNCPCLRDLQPDQARRPDYA) lie on the Extracellular side of the membrane. A helical membrane pass occupies residues 583-603 (VFMLKYFMCLVVGITSGVWVW). Residues 604-685 (SGKTLESWRA…YPKQMPLSQV (82 aa)) are Cytoplasmic-facing. Positions 606–611 (KTLESW) match the Lys-Thr-X-X-X-Trp motif, mediates interaction with the PDZ domain of Dvl family members motif. The span at 631–655 (AGGSGPGGSGPGPGGGGGHGGGGGS) shows a compositional bias: gly residues. Residues 631–656 (AGGSGPGGSGPGPGGGGGHGGGGGSL) form a disordered region. The short motif at 683–685 (SQV) is the PDZ-binding element.

Belongs to the G-protein coupled receptor Fz/Smo family. In terms of assembly, component of a Wnt-signaling complex that contains a WNT protein, a FZD protein and LRP5 or LRP6. Interacts directly with LRP5 or LRP6; the interaction is promoted by Wnt-binding and signaling and inhibited by DKK1. Interacts (via the PDZ-binding motif) with GPOC (via its PDZ domain). Interacts with RSPO1 and RSPO3. Interacts with glypican GPC3. In terms of processing, ubiquitinated by ZNRF3, leading to its degradation by the proteasome. As to expression, expressed in chondrocytes.

It localises to the membrane. Its subcellular location is the golgi apparatus. It is found in the cell membrane. Its function is as follows. Receptor for Wnt proteins. Component of the Wnt-Fzd-LRP5-LRP6 complex that triggers beta-catenin signaling through inducing aggregation of receptor-ligand complexes into ribosome-sized signalosomes. The beta-catenin canonical signaling pathway leads to the activation of disheveled proteins, inhibition of GSK-3 kinase, nuclear accumulation of beta-catenin and activation of Wnt target genes. A second signaling pathway involving PKC and calcium fluxes has been seen for some family members, but it is not yet clear if it represents a distinct pathway or if it can be integrated in the canonical pathway, as PKC seems to be required for Wnt-mediated inactivation of GSK-3 kinase. Both pathways seem to involve interactions with G-proteins. May be involved in transduction and intercellular transmission of polarity information during tissue morphogenesis and/or in differentiated tissues. Coreceptor along with RYK of Wnt proteins, such as WNT1. The protein is Frizzled-8 (Fzd8) of Mus musculus (Mouse).